Here is a 430-residue protein sequence, read N- to C-terminus: N-acylneuraminate cytidylyltransferase A (430 aa).

Residues 1–29 (MDAVNENGKRAMKDDSHGNSTSPKRRKSR) are disordered. The span at 7 to 17 (NGKRAMKDDSH) shows a compositional bias: basic and acidic residues. The short motif at 9 to 27 (KRAMKDDSHGNSTSPKRRK) is the Bipartite nuclear localization signal element. Positions 38, 48, 97, 106, 108, and 129 each coordinate substrate. Residue arginine 187 is part of the active site.

It belongs to the CMP-NeuNAc synthase family. As to quaternary structure, homotetramer.

The protein localises to the nucleus. The enzyme catalyses an N-acylneuraminate + CTP = a CMP-N-acyl-beta-neuraminate + diphosphate. It functions in the pathway amino-sugar metabolism; N-acetylneuraminate metabolism. In terms of biological role, catalyzes the activation of N-acetylneuraminic acid (NeuNAc) to cytidine 5'-monophosphate N-acetylneuraminic acid (CMP-NeuNAc), a substrate required for the addition of sialic acid. Also has activity towards N-glycolylneuraminic acid (Neu5Gc). Has weak activity towards 2-keto-3-deoxy-D-glycero-D-galacto-nononic acid (KDN). This Danio rerio (Zebrafish) protein is N-acylneuraminate cytidylyltransferase A.